Consider the following 338-residue polypeptide: Protein FosB (338 aa).

Disordered stretches follow at residues 1–54 (MFQA…PGSF), 79–191 (MAQS…DQLE), 222–276 (CKIP…PPNL), and 316–338 (GAQR…LLAL). Polar residues-rich tracts occupy residues 13–31 (SRCS…SVDS) and 79–88 (MAQSQGQPLA). Ser-27 carries the post-translational modification Phosphoserine. Positions 113–124 (SSGGASGSGGPS) are enriched in gly residues. Positions 125–137 (TSGTTSGPGPARP) are enriched in low complexity. The bZIP domain maps to 155 to 218 (EEKRRVRRER…ERLEFVLVAH (64 aa)). The tract at residues 157–182 (KRRVRRERNKLAAAKCRNRRRELTDR) is basic motif. Residues 183–211 (LQAETDQLEEEKAELESEIAELQKEKERL) are leucine-zipper. A compositionally biased stretch (pro residues) spans 256–265 (LPPPPPPPLP). 2 stretches are compositionally biased toward polar residues: residues 266 to 276 (FQTSQDAPPNL) and 318 to 338 (QRTS…LLAL).

This sequence belongs to the bZIP family. Fos subfamily. As to quaternary structure, heterodimer; binds to DNA as heterodimer. Component of an AP-1 transcription factor complex; composed of FOS-JUN heterodimers. As part of the AP-1 transcription factor complex, forms heterodimers with JUN, JUNB or JUND, thereby binding to the AP-1 consensus sequence and stimulating transcription. Interacts with the BAF multiprotein chromatin-remodeling complex subunits SMARCB1 and SMARCD1. Interacts with ARID1A and JUN. Homodimer under oxidizing conditions and monomer under reducing conditions (in vitro). Heterodimer; binds to DNA as heterodimer. Forms heterodimers with JUNB, JUN or JUND; thereby binding to the AP-1 consensus sequence but does not stimulate transcription. Forms heterodimers with JUND under oxidizing conditions. In terms of processing, phosphorylated. Post-translationally, phosphorylated at Ser-27 by CSNK2A1; phosphorylation increases protein stability and transactivation potential. In terms of tissue distribution, expressed in the nucleus accumbens of the striatum (at protein level).

It localises to the nucleus. Its function is as follows. Heterodimerizes with proteins of the JUN family to form an AP-1 transcription factor complex, thereby enhancing their DNA binding activity to gene promoters containing an AP-1 consensus sequence 5'-TGA[GC]TCA-3' and enhancing their transcriptional activity. As part of the AP-1 complex, facilitates enhancer selection together with cell-type-specific transcription factors by collaboratively binding to nucleosomal enhancers and recruiting the SWI/SNF (BAF) chromatin remodeling complex to establish accessible chromatin. Together with JUN, plays a role in activation-induced cell death of T cells by binding to the AP-1 promoter site of FASLG/CD95L, and inducing its transcription in response to activation of the TCR/CD3 signaling pathway. Exhibits transactivation activity in vitro. Involved in the display of nurturing behavior towards newborns. May play a role in neurogenesis in the hippocampus and in learning and memory-related tasks by regulating the expression of various genes involved in neurogenesis, depression and epilepsy. Implicated in behavioral responses related to morphine reward and spatial memory. Exhibits lower transactivation activity than isoform 1 in vitro. The heterodimer with JUN does not display any transcriptional activity, and may thereby act as an transcriptional inhibitor. May be involved in the regulation of neurogenesis in the hippocampus. May play a role in synaptic modifications in nucleus accumbens medium spiny neurons and thereby play a role in adaptive and pathological reward-dependent learning, including maladaptive responses involved in drug addiction. Seems to be more stably expressed with a half-life of ~9.5 hours in cell culture as compared to 1.5 hours half-life of isoform 1. The chain is Protein FosB (FOSB) from Homo sapiens (Human).